Reading from the N-terminus, the 748-residue chain is Disintegrin and metalloproteinase domain-containing protein 10 (748 aa).

A signal peptide spans 1–19; it reads MVLLRVLILLLSWVAGLGG. Positions 20–213 are excised as a propeptide; it reads QYGNPLNKYI…NGPELLRKKR (194 aa). Residues 20-672 lie on the Extracellular side of the membrane; it reads QYGNPLNKYI…SPELYENIAE (653 aa). The short motif at 171-178 is the Cysteine switch element; that stretch reads GGCADHSV. Cys173 is a binding site for Zn(2+). Positions 220-456 constitute a Peptidase M12B domain; sequence NTCQLYIQTD…KRNNCFVESG (237 aa). N-linked (GlcNAc...) asparagine glycans are attached at residues Asn267 and Asn278. Intrachain disulfides connect Cys344–Cys451, Cys399–Cys435, Cys460–Cys495, Cys471–Cys484, Cys473–Cys479, Cys483–Cys515, Cys503–Cys511, Cys510–Cys536, Cys524–Cys543, Cys530–Cys562, Cys555–Cys567, Cys572–Cys598, Cys580–Cys607, Cys582–Cys597, Cys594–Cys639, and Cys632–Cys645. His383 is a binding site for Zn(2+). Glu384 is a catalytic residue. The Zn(2+) site is built by His387 and His393. Asn439 carries N-linked (GlcNAc...) asparagine glycosylation. Positions 457-551 constitute a Disintegrin domain; sequence QPICGNGMVE…LCPASDPKPN (95 aa). Asn551 carries N-linked (GlcNAc...) asparagine glycosylation. Residues 673–696 traverse the membrane as a helical segment; it reads WIVAYWWAVLLMGIALIMLMAGFI. The Cytoplasmic portion of the chain corresponds to 697-748; the sequence is KICSVHTPSSNPKLPPPKPLPGTLKRRRPPQPIQQPQRQRPRESYQMGHMRR. The segment at 704 to 748 is disordered; it reads PSSNPKLPPPKPLPGTLKRRRPPQPIQQPQRQRPRESYQMGHMRR. Positions 708 to 715 match the SH3-binding motif; sequence PKLPPPKP. Thr719 carries the phosphothreonine modification. An SH3-binding motif is present at residues 722–728; it reads RRRPPQP. The tract at residues 734–748 is interaction with AP2A1, AP2A2 and AP2M1; sequence RQRPRESYQMGHMRR.

In terms of assembly, forms a ternary EFNA5-EPHA3-ADAM10 complex mediating EFNA5 extracellular domain shedding by ADAM10 which regulates the EFNA5-EPHA3 complex internalization and function, the cleavage occurs in trans, with ADAM10 and its substrate being on the membranes of opposing cells. Interacts with the clathrin adapter AP2 complex subunits AP2A1, AP2A2, AP2B1, and AP2M1; this interaction facilitates ADAM10 endocytosis from the plasma membrane during long-term potentiation in hippocampal neurons. Forms a ternary complex composed of ADAM10, EPHA4 and CADH1; within the complex, ADAM10 cleaves CADH1 which disrupts adherens junctions. Interacts with EPHA2. Interacts with NGF in a divalent cation-dependent manner. Interacts with TSPAN14; the interaction promotes ADAM10 maturation and cell surface expression. Interacts with TSPAN5, TSPAN10, TSPAN14, TSPAN15, TSPAN17 and TSPAN33; these interactions regulate ADAM10 substrate specificity, endocytosis and turnover. Interacts (via extracellular domain) with TSPAN33 (via extracellular domain) and (via cytoplasmic domain) with AFDN; interaction with TSPAN33 allows the docking of ADAM10 to zonula adherens through a PDZ11-dependent interaction between TSPAN33 and PLEKHA7 while interaction with AFDN locks ADAM10 at zonula adherens. Interacts with DLG1; this interaction recruits ADAM10 to the cell membrane during long-term depression in hippocampal neurons. Interacts (via extracellular domain) with BACE1 (via extracellular domain). Interacts with FAM171A1. Requires Zn(2+) as cofactor. In terms of processing, the precursor is cleaved by furin and PCSK7. As to expression, expressed at low level in kidney, spleen, lung, adrenal, heart and peripheral nerve.

The protein resides in the golgi apparatus membrane. It localises to the cell membrane. It is found in the cytoplasmic vesicle. The protein localises to the clathrin-coated vesicle. Its subcellular location is the cell projection. The protein resides in the axon. It localises to the dendrite. It is found in the cell junction. The protein localises to the adherens junction. Its subcellular location is the cytoplasm. The catalysed reaction is Endopeptidase of broad specificity.. With respect to regulation, catalytically inactive when the propeptide is intact and associated with the mature enzyme. The disintegrin and cysteine-rich regions modulate access of substrates to exerts an inhibitory effect on the cleavage of ADAM10 substrates. Functionally, transmembrane metalloprotease which mediates the ectodomain shedding of a myriad of transmembrane proteins, including adhesion proteins, growth factor precursors and cytokines being essential for development and tissue homeostasis. Associates with six members of the tetraspanin superfamily TspanC8 which regulate its exit from the endoplasmic reticulum and its substrate selectivity. Cleaves the membrane-bound precursor of TNF-alpha at '76-Ala-|-Val-77' to its mature soluble form. Responsible for the proteolytical release of soluble JAM3 from endothelial cells surface. Responsible for the proteolytic release of several other cell-surface proteins, including heparin-binding epidermal growth-like factor, ephrin-A2, CD44, CDH2 and for constitutive and regulated alpha-secretase cleavage of amyloid precursor protein (APP). Contributes to the normal cleavage of the cellular prion protein. Involved in the cleavage of the adhesion molecule L1 at the cell surface and in released membrane vesicles, suggesting a vesicle-based protease activity. Also controls the proteolytic processing of Notch and mediates lateral inhibition during neurogenesis. Required for the development of type 1 transitional B cells into marginal zone B cells, probably by cleaving Notch. Responsible for the FasL ectodomain shedding and for the generation of the remnant ADAM10-processed FasL (FasL APL) transmembrane form. Also cleaves the ectodomain of the integral membrane proteins CORIN and ITM2B. Mediates the proteolytic cleavage of LAG3, leading to release the secreted form of LAG3. Mediates the proteolytic cleavage of IL6R and IL11RA, leading to the release of secreted forms of IL6R and IL11RA. Enhances the cleavage of CHL1 by BACE1. Cleaves NRCAM. Cleaves TREM2, resulting in shedding of the TREM2 ectodomain. Involved in the development and maturation of glomerular and coronary vasculature. During development of the cochlear organ of Corti, promotes pillar cell separation by forming a ternary complex with CADH1 and EPHA4 and cleaving CADH1 at adherens junctions. May regulate the EFNA5-EPHA3 signaling. Regulates leukocyte transmigration as a sheddase for the adherens junction protein VE-cadherin/CDH5 in endothelial cells. The sequence is that of Disintegrin and metalloproteinase domain-containing protein 10 (ADAM10) from Bos taurus (Bovine).